Here is a 501-residue protein sequence, read N- to C-terminus: Growth/differentiation factor 5 (501 aa).

An N-terminal signal peptide occupies residues 1-27 (MRLPKLLTFLLWYLAWLDLEFICTVLG). The propeptide occupies 28–381 (APDLGQRPQG…YLFSQRRKRR (354 aa)). The tract at residues 29–169 (PDLGQRPQGT…EPFRPPPITP (141 aa)) is disordered. The span at 99–111 (PRPGGPEPKPGHP) shows a compositional bias: pro residues. Residues 148 to 162 (KAREPGPPREPKEPF) show a composition bias toward basic and acidic residues. N-linked (GlcNAc...) asparagine glycosylation is present at asparagine 189. Residues 246–265 (PSDTAKPAAPGGGRAAQLKL) are disordered. Intrachain disulfides connect cysteine 400/cysteine 466, cysteine 429/cysteine 498, and cysteine 433/cysteine 500.

It belongs to the TGF-beta family. In terms of assembly, homodimer; disulfide-linked. Interacts with serine proteases, HTRA1 and HTRA3. Following LPS binding, may form a complex with CXCR4, HSP90AA1 and HSPA8. Interacts with high affinity with NOG; inhibits chondrogenesis. Interacts with high affinity with BMPR1B and lower affinity with BMPR1A; positively regulates chondrocyte differentiation and induces SMAD dependent signaling. Interacts with FBN1 (via N-terminal domain) and FBN2. Interacts with TGFBR3. Predominantly expressed in long bones during embryonic development. Expressed in monocytes (at protein level).

The protein localises to the secreted. It localises to the cell membrane. Growth factor involved in bone and cartilage formation. During cartilage development regulates differentiation of chondrogenic tissue through two pathways. Firstly, positively regulates differentiation of chondrogenic tissue through its binding of high affinity with BMPR1B and of less affinity with BMPR1A, leading to induction of SMAD1-SMAD5-SMAD8 complex phosphorylation and then SMAD protein signaling transduction. Secondly, negatively regulates chondrogenic differentiation through its interaction with NOG. Required to prevent excessive muscle loss upon denervation. This function requires SMAD4 and is mediated by phosphorylated SMAD1/5/8. Binds bacterial lipopolysaccharide (LPS) and mediates LPS-induced inflammatory response, including TNF secretion by monocytes. This Homo sapiens (Human) protein is Growth/differentiation factor 5 (GDF5).